Consider the following 172-residue polypeptide: Translation initiation factor IF-3 (172 aa).

The protein belongs to the IF-3 family. As to quaternary structure, monomer.

It localises to the cytoplasm. In terms of biological role, IF-3 binds to the 30S ribosomal subunit and shifts the equilibrium between 70S ribosomes and their 50S and 30S subunits in favor of the free subunits, thus enhancing the availability of 30S subunits on which protein synthesis initiation begins. The polypeptide is Translation initiation factor IF-3 (Campylobacter jejuni subsp. jejuni serotype O:6 (strain 81116 / NCTC 11828)).